The primary structure comprises 579 residues: Rhoptry surface protein CERLI2 (579 aa).

The C2 domain occupies 52–84; sequence LHNYRTFYLLIKINEIFNINKYKQIYIIVNTDK. 11 consecutive repeat copies span residues 442–451, 452–461, 462–471, 472–481, 482–491, 492–501, 502–511, 522–531, 532–541, 542–551, and 552–561. Residues 442-561 are 12 X 10 AA tandem repeat of Q-T-E-I-[K/N]-N-D-[H/N/I][I/N]; it reads QTDEIKNDNI…QTDEIKNDIN (120 aa).

The protein localises to the cytoplasmic vesicle. Its subcellular location is the secretory vesicle. It is found in the rhoptry membrane. The protein resides in the cell membrane. It localises to the host cell membrane. Plays an important role in rhoptry physiology and thus is essential for merozoite invasion of host erythrocytes. The sequence is that of Rhoptry surface protein CERLI2 from Plasmodium falciparum (isolate 3D7).